The following is a 345-amino-acid chain: Acetylserotonin O-methyltransferase (345 aa).

S-adenosyl-L-methionine-binding positions include Tyr-147, Trp-164, Asp-210, 235 to 237 (GDF), and Arg-252. The active-site Proton donor/acceptor is His-255. Substrate contacts are provided by Asp-256, Asn-302, and Gln-306.

Belongs to the class I-like SAM-binding methyltransferase superfamily. Cation-independent O-methyltransferase family. As to quaternary structure, homodimer. As to expression, highly expressed in pineal gland. In the retina, 10- to 100-fold lower expression compared to pineal gland, if any.

The enzyme catalyses N-acetylserotonin + S-adenosyl-L-methionine = melatonin + S-adenosyl-L-homocysteine + H(+). It functions in the pathway aromatic compound metabolism; melatonin biosynthesis; melatonin from serotonin: step 1/2. In terms of biological role, catalyzes the transfer of a methyl group onto N-acetylserotonin, producing melatonin (N-acetyl-5-methoxytryptamine). In Macaca mulatta (Rhesus macaque), this protein is Acetylserotonin O-methyltransferase (ASMT).